The sequence spans 897 residues: Isoleucine--tRNA ligase (897 aa).

A 'HIGH' region motif is present at residues 59-69; the sequence is PYANGDIHVGH. Residue Glu553 coordinates L-isoleucyl-5'-AMP. A 'KMSKS' region motif is present at residues 594-598; that stretch reads KMSKS. Lys597 serves as a coordination point for ATP. Cys866, Cys869, Cys883, and Cys886 together coordinate Zn(2+).

This sequence belongs to the class-I aminoacyl-tRNA synthetase family. IleS type 1 subfamily. In terms of assembly, monomer. Zn(2+) serves as cofactor.

It is found in the cytoplasm. It catalyses the reaction tRNA(Ile) + L-isoleucine + ATP = L-isoleucyl-tRNA(Ile) + AMP + diphosphate. Functionally, catalyzes the attachment of isoleucine to tRNA(Ile). As IleRS can inadvertently accommodate and process structurally similar amino acids such as valine, to avoid such errors it has two additional distinct tRNA(Ile)-dependent editing activities. One activity is designated as 'pretransfer' editing and involves the hydrolysis of activated Val-AMP. The other activity is designated 'posttransfer' editing and involves deacylation of mischarged Val-tRNA(Ile). This chain is Isoleucine--tRNA ligase, found in Mycoplasmopsis synoviae (strain 53) (Mycoplasma synoviae).